A 139-amino-acid chain; its full sequence is ATP synthase epsilon chain (139 aa).

It belongs to the ATPase epsilon chain family. F-type ATPases have 2 components, CF(1) - the catalytic core - and CF(0) - the membrane proton channel. CF(1) has five subunits: alpha(3), beta(3), gamma(1), delta(1), epsilon(1). CF(0) has three main subunits: a, b and c.

Its subcellular location is the cell inner membrane. Functionally, produces ATP from ADP in the presence of a proton gradient across the membrane. The chain is ATP synthase epsilon chain from Acinetobacter baylyi (strain ATCC 33305 / BD413 / ADP1).